The primary structure comprises 132 residues: Small ribosomal subunit protein uS8 (132 aa).

This sequence belongs to the universal ribosomal protein uS8 family. Part of the 30S ribosomal subunit. Contacts proteins S5 and S12.

One of the primary rRNA binding proteins, it binds directly to 16S rRNA central domain where it helps coordinate assembly of the platform of the 30S subunit. The sequence is that of Small ribosomal subunit protein uS8 from Borrelia garinii subsp. bavariensis (strain ATCC BAA-2496 / DSM 23469 / PBi) (Borreliella bavariensis).